The chain runs to 429 residues: Sex determination protein fox-1 (429 aa).

A compositionally biased stretch (low complexity) spans 156–180; sequence ATTAGSTNGSAAVTQPDPSTSSGPD. The segment at 156 to 188 is disordered; that stretch reads ATTAGSTNGSAAVTQPDPSTSSGPDGPKRLHVS. An RRM domain is found at 183 to 259; the sequence is KRLHVSNIPF…RKIEVNCATA (77 aa).

In terms of assembly, interacts with sup-12. In terms of tissue distribution, in males and hermaphrodites expressed in a subset of cells in the head and tail. Expressed in the pharynx, intestine and in muscles from the vulva and body wall.

The protein resides in the nucleus. Functionally, RNA-binding protein that regulates tissue-specific alternative splicing events by binding to 5'-UGCAUG-3' and 5'-GCACG-3' elements. Also binds to poly(A), poly(G), poly(C), or poly(U) stretches of RNA. Plays a role in the sex determination pathway and X chromosome dosage compensation, and together with sex-1 is involved in making the distinction between one and two X-chromosomes. Binds to 5'-GCAUG-3' and 5'-GCACG-3' elements in intron 6 of the pre-mRNA of the sex-determining factor xol-1 to promote its alternative splicing and together with sex-1 negatively regulates the expression of xol-1 to promote hermaphrodite development. Negatively regulates the expression of the active isoform of xol-1 (isoform b) by promoting intron 6 retention and the deletion of exon 7 coding sequences in hermaphrodite embryos. Furthermore, binding to the pre-mRNA of xol-1 can also direct the use of an alternative 3' splice site enabling the xol-1 transcript to be trans-spliced to unrelated genes on chromosome 2, which also leads to xol-1 exon 7 deletion. Does not seem to regulate the retention of introns 1 to 5 of xol-1 pre-mRNA. Plays a role in the association of the dosage compensation complex proteins dpy-27 and sdc-3 with the hermaphrodite X chromosomes. Binds to 5'-UGCAUG-3' elements in intron 7 of the pre-mRNA of unc-32 to promote its alternative splicing in neuronal tissues. Binds to 5'-UGCAUG-3' elements in intron 4 of the pre-mRNA of egl-15 to promote its alternative splicing in body wall muscle tissues. Promotes binding of RNA-binding protein sup-12 to target RNA. Plays a role in male mating behavior. The sequence is that of Sex determination protein fox-1 from Caenorhabditis elegans.